We begin with the raw amino-acid sequence, 209 residues long: Small ribosomal subunit protein uS4 (209 aa).

The interval 23 to 46 (SRNPLLKKPHPPGQHGMQRKKKSD) is disordered. The S4 RNA-binding domain occupies 93 to 153 (CRLDNMVYRM…EKSKRLQSVK (61 aa)).

This sequence belongs to the universal ribosomal protein uS4 family. In terms of assembly, part of the 30S ribosomal subunit. Contacts protein S5. The interaction surface between S4 and S5 is involved in control of translational fidelity.

Functionally, one of the primary rRNA binding proteins, it binds directly to 16S rRNA where it nucleates assembly of the body of the 30S subunit. With S5 and S12 plays an important role in translational accuracy. This chain is Small ribosomal subunit protein uS4, found in Chlamydia pneumoniae (Chlamydophila pneumoniae).